Here is a 217-residue protein sequence, read N- to C-terminus: Probable transaldolase (217 aa).

K83 serves as the catalytic Schiff-base intermediate with substrate.

This sequence belongs to the transaldolase family. Type 3B subfamily.

Its subcellular location is the cytoplasm. It carries out the reaction D-sedoheptulose 7-phosphate + D-glyceraldehyde 3-phosphate = D-erythrose 4-phosphate + beta-D-fructose 6-phosphate. It functions in the pathway carbohydrate degradation; pentose phosphate pathway; D-glyceraldehyde 3-phosphate and beta-D-fructose 6-phosphate from D-ribose 5-phosphate and D-xylulose 5-phosphate (non-oxidative stage): step 2/3. Its function is as follows. Transaldolase is important for the balance of metabolites in the pentose-phosphate pathway. This is Probable transaldolase from Fervidobacterium nodosum (strain ATCC 35602 / DSM 5306 / Rt17-B1).